A 237-amino-acid polypeptide reads, in one-letter code: 2-C-methyl-D-erythritol 4-phosphate cytidylyltransferase (237 aa).

Belongs to the IspD/TarI cytidylyltransferase family. IspD subfamily.

The enzyme catalyses 2-C-methyl-D-erythritol 4-phosphate + CTP + H(+) = 4-CDP-2-C-methyl-D-erythritol + diphosphate. The protein operates within isoprenoid biosynthesis; isopentenyl diphosphate biosynthesis via DXP pathway; isopentenyl diphosphate from 1-deoxy-D-xylulose 5-phosphate: step 2/6. Its function is as follows. Catalyzes the formation of 4-diphosphocytidyl-2-C-methyl-D-erythritol from CTP and 2-C-methyl-D-erythritol 4-phosphate (MEP). This is 2-C-methyl-D-erythritol 4-phosphate cytidylyltransferase from Clostridioides difficile (strain 630) (Peptoclostridium difficile).